The following is a 568-amino-acid chain: Potassium-transporting ATPase potassium-binding subunit (568 aa).

10 helical membrane passes run 3–23, 64–84, 133–153, 179–199, 255–275, 281–301, 375–395, 418–438, 497–517, and 535–555; these read TEIL…YPLG, FLKA…VLLV, FVIM…MAGV, ILLP…TPMG, MVEC…LGFY, LGYS…FINV, FGGV…AVFI, IATF…AISS, IVLI…AGLL, and VTFA…SFFP.

This sequence belongs to the KdpA family. The system is composed of three essential subunits: KdpA, KdpB and KdpC.

The protein resides in the cell inner membrane. Part of the high-affinity ATP-driven potassium transport (or Kdp) system, which catalyzes the hydrolysis of ATP coupled with the electrogenic transport of potassium into the cytoplasm. This subunit binds the periplasmic potassium ions and delivers the ions to the membrane domain of KdpB through an intramembrane tunnel. This Bacteroides fragilis (strain ATCC 25285 / DSM 2151 / CCUG 4856 / JCM 11019 / LMG 10263 / NCTC 9343 / Onslow / VPI 2553 / EN-2) protein is Potassium-transporting ATPase potassium-binding subunit.